The following is a 436-amino-acid chain: Nicotinate phosphoribosyltransferase (436 aa).

The residue at position 231 (histidine 231) is a Phosphohistidine; by autocatalysis.

This sequence belongs to the NAPRTase family. Transiently phosphorylated on a His residue during the reaction cycle. Phosphorylation strongly increases the affinity for substrates and increases the rate of nicotinate D-ribonucleotide production. Dephosphorylation regenerates the low-affinity form of the enzyme, leading to product release.

The catalysed reaction is nicotinate + 5-phospho-alpha-D-ribose 1-diphosphate + ATP + H2O = nicotinate beta-D-ribonucleotide + ADP + phosphate + diphosphate. It functions in the pathway cofactor biosynthesis; NAD(+) biosynthesis; nicotinate D-ribonucleotide from nicotinate: step 1/1. Functionally, catalyzes the synthesis of beta-nicotinate D-ribonucleotide from nicotinate and 5-phospho-D-ribose 1-phosphate at the expense of ATP. This Vibrio parahaemolyticus serotype O3:K6 (strain RIMD 2210633) protein is Nicotinate phosphoribosyltransferase.